Reading from the N-terminus, the 191-residue chain is Protein Ves (191 aa).

This sequence belongs to the Ves family.

In Shigella flexneri serotype 5b (strain 8401), this protein is Protein Ves.